The primary structure comprises 207 residues: dITP/XTP pyrophosphatase (207 aa).

8 to 13 provides a ligand contact to substrate; sequence TNNKNK. D72 functions as the Proton acceptor in the catalytic mechanism. Mg(2+) is bound at residue D72. Residues S73, 157 to 160, K180, and 185 to 186 each bind substrate; these read FGYD and HR.

This sequence belongs to the HAM1 NTPase family. Homodimer. Mg(2+) serves as cofactor.

The enzyme catalyses XTP + H2O = XMP + diphosphate + H(+). The catalysed reaction is dITP + H2O = dIMP + diphosphate + H(+). It catalyses the reaction ITP + H2O = IMP + diphosphate + H(+). In terms of biological role, pyrophosphatase that catalyzes the hydrolysis of nucleoside triphosphates to their monophosphate derivatives, with a high preference for the non-canonical purine nucleotides XTP (xanthosine triphosphate), dITP (deoxyinosine triphosphate) and ITP. Seems to function as a house-cleaning enzyme that removes non-canonical purine nucleotides from the nucleotide pool, thus preventing their incorporation into DNA/RNA and avoiding chromosomal lesions. In Lactobacillus johnsonii (strain CNCM I-12250 / La1 / NCC 533), this protein is dITP/XTP pyrophosphatase.